The chain runs to 93 residues: Alpha-defensin 10 (93 aa).

A signal peptide spans Met1–Ala19. Positions Asp20 to Ser58 are excised as a propeptide. Residues Ile22–Glu56 form a disordered region. Disulfide bonds link Cys64-Cys92, Cys66-Cys81, and Cys71-Cys91.

It belongs to the alpha-defensin family. In terms of tissue distribution, paneth cells of the small bowel.

The protein localises to the secreted. Probably contributes to the antimicrobial barrier function of the small bowel mucosa. This chain is Alpha-defensin 10 (Defa10), found in Mus musculus (Mouse).